Here is a 119-residue protein sequence, read N- to C-terminus: Protein yippee-like 3 (119 aa).

The 98-residue stretch at 19-116 (RRYSCVHCRA…IELSHMIKDN (98 aa)) folds into the Yippee domain. 4 residues coordinate Zn(2+): cysteine 23, cysteine 26, cysteine 79, and cysteine 82.

The protein belongs to the yippee family.

The protein resides in the nucleus. It localises to the nucleolus. May be involved in proliferation and apoptosis in myeloid precursor cells. The chain is Protein yippee-like 3 (ypel3) from Oryzias latipes (Japanese rice fish).